The primary structure comprises 654 residues: Glycogen debranching enzyme (654 aa).

D336 (nucleophile) is an active-site residue. Residue E371 is the Proton donor of the active site. The tract at residues 459-484 (EANGEENRDGTNSNYSDNHGKEGLGG) is disordered.

This sequence belongs to the glycosyl hydrolase 13 family.

The catalysed reaction is Hydrolysis of (1-&gt;6)-alpha-D-glucosidic linkages to branches with degrees of polymerization of three or four glucose residues in limit dextrin.. It functions in the pathway glycan degradation; glycogen degradation. In terms of biological role, removes maltotriose and maltotetraose chains that are attached by 1,6-alpha-linkage to the limit dextrin main chain, generating a debranched limit dextrin. The sequence is that of Glycogen debranching enzyme from Salmonella typhi.